The primary structure comprises 896 residues: Trehalose-phosphatase (896 aa).

The segment at 1–554 is glycosyltransferase; that stretch reads MTTTAQDNSP…SNDDMERKMT (554 aa).

The protein in the N-terminal section; belongs to the glycosyltransferase 20 family. It in the C-terminal section; belongs to the trehalose phosphatase family. In terms of assembly, the trehalose synthase complex is composed of the two catalytic subunits TPS1 and TPS2, and at least one of the two regulatory subunits TPS3 or TSL1. It depends on Mg(2+) as a cofactor.

It localises to the cytoplasm. The enzyme catalyses alpha,alpha-trehalose 6-phosphate + H2O = alpha,alpha-trehalose + phosphate. Its pathway is carbohydrate biosynthesis. Its activity is regulated as follows. Inhibited by EDTA. Its function is as follows. Phosphatase catalytic subunit of the trehalose synthase complex that catalyzes the production of trehalose from glucose-6-phosphate and UDP-alpha-D-glucose in a two step process. The protein is Trehalose-phosphatase of Saccharomyces cerevisiae (strain ATCC 204508 / S288c) (Baker's yeast).